The primary structure comprises 1103 residues: Ataxin-2 homolog (1103 aa).

Residues Met1 to Phe10 are compositionally biased toward basic residues. Positions Met1–Phe75 are disordered. Residues Val11–Gly28 are compositionally biased toward gly residues. 2 stretches are compositionally biased toward low complexity: residues Asn33–Asn44 and His56–Gln73. One can recognise a Sm domain in the interval Arg84–Val166. Positions Glu258–Glu287 form a coiled coil. Disordered regions lie at residues Val305–Pro474, Thr516–Ser557, Leu615–Thr763, His901–Gln920, and Gln930–His1103. A compositionally biased stretch (low complexity) spans Pro312–Pro356. The segment covering Val358–Gln371 has biased composition (basic and acidic residues). Residues His366–Gln403 are a coiled coil. Over residues Thr372–Asn463 the composition is skewed to low complexity. Over residues Thr516 to Thr529 the composition is skewed to polar residues. 3 stretches are compositionally biased toward low complexity: residues Thr530–Pro544, Pro637–Thr676, and Thr683–Glu694. Residues Ile691 to Gln730 adopt a coiled-coil conformation. The span at Asn695–Ser741 shows a compositional bias: basic and acidic residues. Positions Ser742–Thr763 are enriched in low complexity. The segment covering Gln930 to Gln957 has biased composition (low complexity). Residues Gln960 to Arg969 show a composition bias toward gly residues. Residues Pro974–Gln984 are compositionally biased toward low complexity. Pro residues predominate over residues Tyr1020–Pro1031. Residues Gln1062–Asn1076 show a composition bias toward low complexity.

It belongs to the ataxin-2 family.

The polypeptide is Ataxin-2 homolog (atxn2) (Dictyostelium discoideum (Social amoeba)).